The following is a 332-amino-acid chain: L-lactate dehydrogenase A chain (332 aa).

Ala2 is modified (N-acetylalanine). Lys5 is subject to N6-acetyllysine; alternate. Lys5 carries the N6-succinyllysine; alternate modification. N6-acetyllysine is present on Lys14. 29-57 (GAVGMACAISILMKDLADELALVDVMEDK) serves as a coordination point for NAD(+). Lys57 carries the N6-acetyllysine; alternate modification. Lys57 is covalently cross-linked (Glycyl lysine isopeptide (Lys-Gly) (interchain with G-Cter in SUMO2); alternate). An N6-acetyllysine modification is found at Lys81. Position 99 (Arg99) interacts with NAD(+). Residue Arg106 coordinates substrate. Lys118 bears the N6-acetyllysine; alternate mark. The residue at position 118 (Lys118) is an N6-succinyllysine; alternate. Residue Lys126 is modified to N6-acetyllysine. Asn138 lines the NAD(+) pocket. Residues Asn138 and Arg169 each coordinate substrate. His193 acts as the Proton acceptor in catalysis. An N6-acetyllysine mark is found at Lys224 and Lys232. The residue at position 239 (Tyr239) is a Phosphotyrosine. The residue at position 243 (Lys243) is an N6-acetyllysine. A substrate-binding site is contributed by Thr248. Thr309 is modified (phosphothreonine). At Ser310 the chain carries Phosphoserine. Residue Lys318 is modified to N6-acetyllysine; alternate. At Lys318 the chain carries N6-succinyllysine; alternate. At Thr322 the chain carries Phosphothreonine.

The protein belongs to the LDH/MDH superfamily. LDH family. In terms of assembly, homotetramer. Interacts with PTEN upstream reading frame protein MP31. Post-translationally, ISGylated.

The protein resides in the cytoplasm. It catalyses the reaction (S)-lactate + NAD(+) = pyruvate + NADH + H(+). The protein operates within fermentation; pyruvate fermentation to lactate; (S)-lactate from pyruvate: step 1/1. In terms of biological role, interconverts simultaneously and stereospecifically pyruvate and lactate with concomitant interconversion of NADH and NAD(+). In Oryctolagus cuniculus (Rabbit), this protein is L-lactate dehydrogenase A chain (LDHA).